Consider the following 497-residue polypeptide: Acetyl-coenzyme A carboxylase carboxyl transferase subunit beta, chloroplastic (497 aa).

One can recognise a CoA carboxyltransferase N-terminal domain in the interval 230–497 (LWVQCENCYG…FFPVNSNSIK (268 aa)). Zn(2+)-binding residues include cysteine 234, cysteine 237, cysteine 253, and cysteine 256. A C4-type zinc finger spans residues 234–256 (CENCYGLNYKKFFRSKFNICEQC).

Belongs to the AccD/PCCB family. In terms of assembly, acetyl-CoA carboxylase is a heterohexamer composed of biotin carboxyl carrier protein, biotin carboxylase and 2 subunits each of ACCase subunit alpha and ACCase plastid-coded subunit beta (accD). The cofactor is Zn(2+).

It localises to the plastid. It is found in the chloroplast stroma. It carries out the reaction N(6)-carboxybiotinyl-L-lysyl-[protein] + acetyl-CoA = N(6)-biotinyl-L-lysyl-[protein] + malonyl-CoA. Its pathway is lipid metabolism; malonyl-CoA biosynthesis; malonyl-CoA from acetyl-CoA: step 1/1. Functionally, component of the acetyl coenzyme A carboxylase (ACC) complex. Biotin carboxylase (BC) catalyzes the carboxylation of biotin on its carrier protein (BCCP) and then the CO(2) group is transferred by the transcarboxylase to acetyl-CoA to form malonyl-CoA. The sequence is that of Acetyl-coenzyme A carboxylase carboxyl transferase subunit beta, chloroplastic from Nandina domestica (Heavenly bamboo).